A 185-amino-acid polypeptide reads, in one-letter code: MISDIIKELEEKMTKSISALKKELTSMKAGRANPAMLDRIEVDYYGTMTPLNQLANISVPESRVLMIQPWDKSAMKSIEKAILISDLGLNPSNDGTTMRLVIPELTEETRKNIVKNVKKAGEDGKVALRAIRRDANDKVKSLKKDNSITEDEMKSAENDIQKKTDSYVKEIDKMVEAKEKEIMSI.

It belongs to the RRF family.

The protein resides in the cytoplasm. In terms of biological role, responsible for the release of ribosomes from messenger RNA at the termination of protein biosynthesis. May increase the efficiency of translation by recycling ribosomes from one round of translation to another. The sequence is that of Ribosome-recycling factor from Clostridium acetobutylicum (strain ATCC 824 / DSM 792 / JCM 1419 / IAM 19013 / LMG 5710 / NBRC 13948 / NRRL B-527 / VKM B-1787 / 2291 / W).